The chain runs to 315 residues: tRNA pseudouridine synthase B (315 aa).

The Nucleophile role is filled by aspartate 54.

It belongs to the pseudouridine synthase TruB family. Type 1 subfamily.

It catalyses the reaction uridine(55) in tRNA = pseudouridine(55) in tRNA. Responsible for synthesis of pseudouridine from uracil-55 in the psi GC loop of transfer RNAs. In Agrobacterium fabrum (strain C58 / ATCC 33970) (Agrobacterium tumefaciens (strain C58)), this protein is tRNA pseudouridine synthase B.